Consider the following 208-residue polypeptide: Ras-related protein Rab-6A (208 aa).

Ser-2 carries the post-translational modification N-acetylserine. Positions 23, 24, 25, 26, 27, 28, 39, 40, 42, and 45 each coordinate GTP. A Mg(2+)-binding site is contributed by Thr-27. A Switch 1 motif is present at residues 32–50 (RFMYDSFDNTYQATIGIDF). Mg(2+) is bound by residues Thr-45 and Asp-68. A Switch 2 motif is present at residues 69–88 (TAGQERFRSLIPSYIRDSTV). Gly-71 is a GTP binding site. The residue at position 82 (Tyr-82) is an O-AMP-tyrosine; by Legionella DrrA. Asn-126, Lys-127, Asp-129, Ser-156, Ala-157, and Lys-158 together coordinate GTP. Phosphoserine is present on Ser-184. S-geranylgeranyl cysteine attachment occurs at residues Cys-206 and Cys-208. At Cys-208 the chain carries Cysteine methyl ester.

Belongs to the small GTPase superfamily. Rab family. Interacts (GTP-bound) with DYNLRB1; the interaction is direct. Interacts with BICD1. Interacts with BICD2; the interaction is direct. Interacts (GTP-bound) with VPS13B. In terms of assembly, interacts with BICD1. Interacts (GDP-bound) with DYNLRB1; the interaction is direct. Interacts (GTP-bound) with VPS13B. As to quaternary structure, interacts with BICDL1; leads to its accumulation in the pericentrosomal region. Interacts with SCYL1BP1. Interacts with VSP52. Interacts with RABGAP1. Interacts with GCC2 (via its GRIP domain). Interacts with RAB6IP1 (via its RUN 1 domain). Interacts with TMF1. Interacts with CIMAP3. Interacts (GTP-bound) with APBA1/MINT1 isoform 2, also called Mint1_826, but not with isoform 1. Interacts with RIC1; the interaction is direct with a preference for RAB6A-GDP. Interacts with RGP1; the interaction is direct with a preference for RAB6A-GDP. (Microbial infection) Interacts with human cytomegalovirus protein UL32. The cofactor is Mg(2+). Prenylated. Ubiquitous.

It is found in the golgi apparatus membrane. The protein resides in the cytoplasmic vesicle. Its subcellular location is the secretory vesicle. The protein localises to the acrosome membrane. It catalyses the reaction GTP + H2O = GDP + phosphate + H(+). With respect to regulation, regulated by guanine nucleotide exchange factors (GEFs) which promote the exchange of bound GDP for free GTP. Regulated by GTPase activating proteins (GAPs) which increase the GTP hydrolysis activity. Inhibited by GDP dissociation inhibitors (GDIs). Its function is as follows. The small GTPases Rab are key regulators of intracellular membrane trafficking, from the formation of transport vesicles to their fusion with membranes. Rabs cycle between an inactive GDP-bound form and an active GTP-bound form that is able to recruit to membranes different sets of downstream effectors directly responsible for vesicle formation, movement, tethering and fusion. RAB6A acts as a regulator of COPI-independent retrograde transport from the Golgi apparatus towards the endoplasmic reticulum (ER). Has a low GTPase activity. Recruits VPS13B to the Golgi membrane. Plays a role in neuron projection development. This is Ras-related protein Rab-6A from Homo sapiens (Human).